Reading from the N-terminus, the 216-residue chain is Pyridoxine/pyridoxamine 5'-phosphate oxidase (216 aa).

Substrate is bound by residues 9–12 (RLSY) and Arg67. FMN is bound by residues 62 to 67 (RIVLLR), 77 to 78 (YT), Lys84, and Gln106. 3 residues coordinate substrate: Tyr124, Arg128, and Ser132. Residues 142–143 (QS) and Trp188 contribute to the FMN site. Residue 194–196 (RMH) participates in substrate binding. Arg198 lines the FMN pocket.

The protein belongs to the pyridoxamine 5'-phosphate oxidase family. Homodimer. It depends on FMN as a cofactor.

It catalyses the reaction pyridoxamine 5'-phosphate + O2 + H2O = pyridoxal 5'-phosphate + H2O2 + NH4(+). The catalysed reaction is pyridoxine 5'-phosphate + O2 = pyridoxal 5'-phosphate + H2O2. The protein operates within cofactor metabolism; pyridoxal 5'-phosphate salvage; pyridoxal 5'-phosphate from pyridoxamine 5'-phosphate: step 1/1. Its pathway is cofactor metabolism; pyridoxal 5'-phosphate salvage; pyridoxal 5'-phosphate from pyridoxine 5'-phosphate: step 1/1. In terms of biological role, catalyzes the oxidation of either pyridoxine 5'-phosphate (PNP) or pyridoxamine 5'-phosphate (PMP) into pyridoxal 5'-phosphate (PLP). This chain is Pyridoxine/pyridoxamine 5'-phosphate oxidase, found in Psychrobacter arcticus (strain DSM 17307 / VKM B-2377 / 273-4).